Here is a 75-residue protein sequence, read N- to C-terminus: Putative defensin-like protein 126 (75 aa).

The signal sequence occupies residues 1–24 (MSKSTFLFVYIILILGSMVNEIQG). Disulfide bonds link C29-C73, C38-C57, C43-C67, and C47-C69.

Belongs to the DEFL family.

The protein resides in the secreted. In Arabidopsis thaliana (Mouse-ear cress), this protein is Putative defensin-like protein 126 (LCR6).